The primary structure comprises 137 residues: Small ribosomal subunit protein bS6 (137 aa).

The tract at residues 96-137 is disordered; sequence ITEASPMAKAKDERDTRRSSEERAPRAEAAEEVEESAENTAE. Over residues 104–124 the composition is skewed to basic and acidic residues; sequence KAKDERDTRRSSEERAPRAEA. Residues 125–137 are compositionally biased toward acidic residues; that stretch reads AEEVEESAENTAE.

This sequence belongs to the bacterial ribosomal protein bS6 family.

In terms of biological role, binds together with bS18 to 16S ribosomal RNA. In Shewanella halifaxensis (strain HAW-EB4), this protein is Small ribosomal subunit protein bS6.